We begin with the raw amino-acid sequence, 173 residues long: Co-chaperone protein HscB homolog (173 aa).

Residues 2–74 (NYFELFSLSP…ISRAEHMLSL (73 aa)) enclose the J domain.

This sequence belongs to the HscB family. Interacts with HscA and stimulates its ATPase activity.

Its function is as follows. Co-chaperone involved in the maturation of iron-sulfur cluster-containing proteins. Seems to help targeting proteins to be folded toward HscA. This is Co-chaperone protein HscB homolog from Shewanella loihica (strain ATCC BAA-1088 / PV-4).